Here is a 341-residue protein sequence, read N- to C-terminus: Guanine nucleotide-binding protein subunit beta (341 aa).

WD repeat units lie at residues 54–84 (GHLAKIYAMHWASDSRNLVSASQDGKLIVWD), 96–126 (LRSSWVMTCAYAPSGNFVACGGLDNICSIYS), 142–171 (GHTGYLSCCRFIDDNSIVTSSGDMSCALWD), 183–213 (GHTGDVMSLSTSPDFRTFVSGACDASAKLWD), 225–255 (GHESDINAITYFPNGHAFATGSDDATCRLFD), 269–299 (NIICGITSVAFSKSGRLLLGRYDDFNCNVWD), and 311–341 (GHDNRVSCLGVTEDGSAVATGSWDSFLKIWN).

Belongs to the WD repeat G protein beta family. As to quaternary structure, g proteins are composed of 3 units, alpha, beta and gamma.

In terms of biological role, guanine nucleotide-binding proteins (G proteins) are involved as a modulator or transducer in various transmembrane signaling systems. The beta and gamma chains are required for the GTPase activity, for replacement of GDP by GTP, and for G protein-effector interaction. The chain is Guanine nucleotide-binding protein subunit beta from Lymnaea stagnalis (Great pond snail).